Reading from the N-terminus, the 132-residue chain is Putative nickel-responsive regulator (132 aa).

Residues histidine 77, histidine 88, histidine 90, and cysteine 96 each coordinate Ni(2+).

It belongs to the transcriptional regulatory CopG/NikR family. Requires Ni(2+) as cofactor.

Its function is as follows. Transcriptional regulator. The protein is Putative nickel-responsive regulator of Brucella abortus (strain S19).